The sequence spans 112 residues: cAMP-regulated phosphoprotein 19 (112 aa).

The span at 1-11 (MSAESPEPASA) shows a compositional bias: low complexity. The tract at residues 1-49 (MSAESPEPASAEEQKEMEDKVLSPEKAEEAKLKARYPHLGQKPGGSDFL) is disordered. Residues 12–32 (EEQKEMEDKVLSPEKAEEAKL) are compositionally biased toward basic and acidic residues. Residues S62 and S104 each carry the phosphoserine; by GWL modification. Residues 72–112 (MKNKQLPTAAPDKTEVTGDHIPTPQDLPQRKPSLVASKLAG) form a disordered region. S104 carries the post-translational modification Phosphoserine; by PKA.

Belongs to the endosulfine family. As to quaternary structure, interacts (when phosphorylated at Ser-62) with PPP2R2D. Post-translationally, phosphorylation at Ser-62 by MASTL/GWL during mitosis is essential for interaction with PPP2R2D (PR55-delta) and subsequent inactivation of PP2A.

It localises to the cytoplasm. In terms of biological role, protein phosphatase inhibitor that specifically inhibits protein phosphatase 2A (PP2A) during mitosis. Inhibition of PP2A is enhanced when ARPP19 is phosphorylated. When phosphorylated at Ser-62 during mitosis, specifically interacts with PPP2R2D (PR55-delta) and inhibits its activity, leading to inactivation of PP2A, an essential condition to keep cyclin-B1-CDK1 activity high during M phase. This chain is cAMP-regulated phosphoprotein 19 (ARPP19), found in Taeniopygia guttata (Zebra finch).